The following is a 97-amino-acid chain: Transcription and mRNA export factor SUS1 (97 aa).

The protein belongs to the ENY2 family. Component of the nuclear pore complex (NPC)-associated TREX-2 complex (transcription and export complex 2), composed of at least SUS1, SAC3, THP1, SEM1, and CDC31. TREX-2 contains 2 SUS1 chains. The TREX-2 complex interacts with the nucleoporin NUP1. Component of the 1.8 MDa SAGA transcription coactivator-HAT complex. SAGA is built of 5 distinct domains with specialized functions. Within the SAGA complex, SUS1, SGF11, SGF73 and UBP8 form an additional subcomplex of SAGA called the DUB module (deubiquitination module). Interacts directly with THP1, SAC3, SGF11, and with the RNA polymerase II.

The protein resides in the nucleus. It is found in the nucleoplasm. Its subcellular location is the cytoplasm. It localises to the P-body. In terms of biological role, involved in mRNA export coupled transcription activation by association with both the TREX-2 and the SAGA complexes. At the promoters, SAGA is required for recruitment of the basal transcription machinery. It influences RNA polymerase II transcriptional activity through different activities such as TBP interaction and promoter selectivity, interaction with transcription activators, and chromatin modification through histone acetylation and deubiquitination. Within the SAGA complex, participates in a subcomplex required for deubiquitination of H2B and for the maintenance of steady-state H3 methylation levels. The TREX-2 complex functions in docking export-competent ribonucleoprotein particles (mRNPs) to the nuclear entrance of the nuclear pore complex (nuclear basket). TREX-2 participates in mRNA export and accurate chromatin positioning in the nucleus by tethering genes to the nuclear periphery. May also be involved in cytoplasmic mRNA decay by interaction with components of P-bodies. In Meyerozyma guilliermondii (strain ATCC 6260 / CBS 566 / DSM 6381 / JCM 1539 / NBRC 10279 / NRRL Y-324) (Yeast), this protein is Transcription and mRNA export factor SUS1.